The following is a 371-amino-acid chain: Surface protein P12p (371 aa).

An N-terminal signal peptide occupies residues 1–20 (MHIVSFIIFFFALFFPISIC). 6-Cys domains lie at 23 to 168 (INGV…LKKN) and 169 to 343 (ILYG…FSNQ). Cystine bridges form between Cys-27-Cys-62, Cys-76-Cys-144, Cys-93-Cys-142, and Cys-173-Cys-245. N-linked (GlcNAc...) asparagine glycosylation occurs at Asn-184. The tract at residues 202-239 (GNNNNDDDNNDDDNNNDNNNNDNNNNNNNNNNNNNNNN) is disordered. Acidic residues predominate over residues 206–216 (NDDDNNDDDNN). Over residues 217–239 (NDNNNNDNNNNNNNNNNNNNNNN) the composition is skewed to low complexity. Asn-242 and Asn-246 each carry an N-linked (GlcNAc...) asparagine glycan. Disulfide bonds link Cys-260/Cys-323 and Cys-271/Cys-321.

Its subcellular location is the cell surface. It is found in the cell membrane. This is Surface protein P12p (PFS12P) from Plasmodium falciparum (isolate 3D7).